A 342-amino-acid polypeptide reads, in one-letter code: Tetraacyldisaccharide 4'-kinase (342 aa).

68 to 75 (TVGGTGKT) lines the ATP pocket.

This sequence belongs to the LpxK family.

The catalysed reaction is a lipid A disaccharide + ATP = a lipid IVA + ADP + H(+). Its pathway is glycolipid biosynthesis; lipid IV(A) biosynthesis; lipid IV(A) from (3R)-3-hydroxytetradecanoyl-[acyl-carrier-protein] and UDP-N-acetyl-alpha-D-glucosamine: step 6/6. Its function is as follows. Transfers the gamma-phosphate of ATP to the 4'-position of a tetraacyldisaccharide 1-phosphate intermediate (termed DS-1-P) to form tetraacyldisaccharide 1,4'-bis-phosphate (lipid IVA). In Burkholderia ambifaria (strain MC40-6), this protein is Tetraacyldisaccharide 4'-kinase.